The sequence spans 265 residues: Undecaprenyl-diphosphatase (265 aa).

A run of 8 helical transmembrane segments spans residues 7 to 27 (VIVS…PISS), 45 to 65 (TKIL…YFFH), 86 to 106 (LHIL…YKKI), 108 to 128 (LLFN…FLLI), 145 to 165 (ISLL…YPGF), 186 to 206 (IEFS…YDFI), 214 to 234 (ILDL…SILC), and 245 to 265 (TSLI…YFIN).

It belongs to the UppP family.

It is found in the cell membrane. It carries out the reaction di-trans,octa-cis-undecaprenyl diphosphate + H2O = di-trans,octa-cis-undecaprenyl phosphate + phosphate + H(+). Its function is as follows. Catalyzes the dephosphorylation of undecaprenyl diphosphate (UPP). Confers resistance to bacitracin. This Buchnera aphidicola subsp. Acyrthosiphon pisum (strain 5A) protein is Undecaprenyl-diphosphatase.